A 634-amino-acid polypeptide reads, in one-letter code: Factor of DNA methylation 5 (634 aa).

Positions 254–469 (IVVDDLANKI…EDTNSALMVK (216 aa)) form a coiled coil.

Acts in association with FDM3 and FDM4 for RNA-directed DNA methylation (RdDM). The sequence is that of Factor of DNA methylation 5 from Arabidopsis thaliana (Mouse-ear cress).